Reading from the N-terminus, the 409-residue chain is tRNA-specific 2-thiouridylase MnmA (409 aa).

ATP-binding positions include 20 to 27 (AMSGGVDS) and leucine 46. Cysteine 114 functions as the Nucleophile in the catalytic mechanism. Cysteine 114 and cysteine 210 form a disulfide bridge. Residue glycine 138 coordinates ATP. Residues 160-162 (RDQ) are interaction with tRNA. Residue cysteine 210 is the Cysteine persulfide intermediate of the active site.

Belongs to the MnmA/TRMU family.

It localises to the cytoplasm. It catalyses the reaction S-sulfanyl-L-cysteinyl-[protein] + uridine(34) in tRNA + AH2 + ATP = 2-thiouridine(34) in tRNA + L-cysteinyl-[protein] + A + AMP + diphosphate + H(+). Its function is as follows. Catalyzes the 2-thiolation of uridine at the wobble position (U34) of tRNA, leading to the formation of s(2)U34. This Bartonella henselae (strain ATCC 49882 / DSM 28221 / CCUG 30454 / Houston 1) (Rochalimaea henselae) protein is tRNA-specific 2-thiouridylase MnmA.